Consider the following 79-residue polypeptide: Sec-independent protein translocase protein TatA (79 aa).

A helical transmembrane segment spans residues 1–21; the sequence is MHMPSGTQWLIILLIVVLLFG.

The protein belongs to the TatA/E family. As to quaternary structure, the Tat system comprises two distinct complexes: a TatABC complex, containing multiple copies of TatA, TatB and TatC subunits, and a separate TatA complex, containing only TatA subunits. Substrates initially bind to the TatABC complex, which probably triggers association of the separate TatA complex to form the active translocon.

Its subcellular location is the cell inner membrane. Part of the twin-arginine translocation (Tat) system that transports large folded proteins containing a characteristic twin-arginine motif in their signal peptide across membranes. TatA could form the protein-conducting channel of the Tat system. The polypeptide is Sec-independent protein translocase protein TatA (Campylobacter lari (strain RM2100 / D67 / ATCC BAA-1060)).